Consider the following 163-residue polypeptide: Phosphopantetheine adenylyltransferase (163 aa).

Thr-11 contacts substrate. ATP is bound by residues 11 to 12 (TF) and His-19. Substrate-binding residues include Lys-43, Leu-75, and Arg-89. ATP is bound by residues 90–92 (GLR), Glu-100, and 125–131 (YSFISST).

It belongs to the bacterial CoaD family. Homohexamer. The cofactor is Mg(2+).

The protein localises to the cytoplasm. The catalysed reaction is (R)-4'-phosphopantetheine + ATP + H(+) = 3'-dephospho-CoA + diphosphate. It participates in cofactor biosynthesis; coenzyme A biosynthesis; CoA from (R)-pantothenate: step 4/5. Reversibly transfers an adenylyl group from ATP to 4'-phosphopantetheine, yielding dephospho-CoA (dPCoA) and pyrophosphate. The protein is Phosphopantetheine adenylyltransferase of Acinetobacter baylyi (strain ATCC 33305 / BD413 / ADP1).